We begin with the raw amino-acid sequence, 327 residues long: MTVRFLFEALNMAIDEEMARNDKVALLGEDIGHYGGSYKVTQNLYAKYGEHRVIDTPIAENSFVGAAIGAAMTGLVTVVEGMNMGFILLAFSQISNNMGMLSATSGGHYHIPIVLRGPGGVGKQLGAEHSQRLECYFQSVPGLQIVACSTPYNAKGLLKSAIRSKNPIFFLEHVLLYNLKAEVPDNDYVLPLEKAEIVRQGNDITILTYSRMRYNVIQAVKVLVEKGYDPEIIDLISLKPFDIETIGKSIQKTHKVLIVEESMMTGGISNVLQSLILENFFDDLDNRPMCLSSPNVPTPYSGPLEEVSIVQTADIIESVEQILTNKM.

Glutamate 60 is a thiamine diphosphate binding site. K(+)-binding residues include isoleucine 113, alanine 161, isoleucine 162, and asparagine 166.

Heterodimer of an alpha and a beta chain. It depends on thiamine diphosphate as a cofactor.

Its subcellular location is the plastid. It is found in the chloroplast. The enzyme catalyses N(6)-[(R)-lipoyl]-L-lysyl-[protein] + pyruvate + H(+) = N(6)-[(R)-S(8)-acetyldihydrolipoyl]-L-lysyl-[protein] + CO2. In terms of biological role, the pyruvate dehydrogenase complex catalyzes the overall conversion of pyruvate to acetyl-CoA and CO(2). It contains multiple copies of three enzymatic components: pyruvate dehydrogenase (E1), dihydrolipoamide acetyltransferase (E2) and lipoamide dehydrogenase (E3). This chain is Pyruvate dehydrogenase E1 component subunit beta (pdhB), found in Mesostigma viride (Green alga).